The following is a 565-amino-acid chain: Alkaline nuclease (565 aa).

It belongs to the herpesviridae alkaline nuclease family. As to quaternary structure, interacts with major DNA-binding protein; this interaction increases the nuclease processivity of the alkaline exonuclease.

It localises to the host nucleus. The protein localises to the host cytoplasm. Functionally, plays a role in processing non linear or branched viral DNA intermediates in order to promote the production of mature packaged unit-length linear progeny viral DNA molecules. Exhibits endonuclease and exonuclease activities and accepts both double-stranded and single-stranded DNA as substrate. Exonuclease digestion of DNA is in the 5'-&gt; 3' direction and the products are 5'-monophosphate nucleosides. Additionally, forms a recombinase with the major DNA-binding protein, which displays strand exchange activity. The chain is Alkaline nuclease from Equine herpesvirus 1 (strain V592) (EHV-1).